Reading from the N-terminus, the 246-residue chain is Ribonuclease 3 (246 aa).

Positions 30–152 constitute an RNase III domain; it reads ISWIEKNLGH…MIGAIFLESG (123 aa). Residue Glu65 participates in Mg(2+) binding. Asp69 is a catalytic residue. The Mg(2+) site is built by Asp138 and Glu141. Residue Glu141 is part of the active site. Residues 177 to 246 enclose the DRBM domain; it reads HPKSALQEWA…AQALLDILAQ (70 aa).

This sequence belongs to the ribonuclease III family. In terms of assembly, homodimer. Mg(2+) is required as a cofactor.

It localises to the cytoplasm. It catalyses the reaction Endonucleolytic cleavage to 5'-phosphomonoester.. In terms of biological role, digests double-stranded RNA. Involved in the processing of primary rRNA transcript to yield the immediate precursors to the large and small rRNAs (23S and 16S). Processes some mRNAs, and tRNAs when they are encoded in the rRNA operon. Processes pre-crRNA and tracrRNA of type II CRISPR loci if present in the organism. The chain is Ribonuclease 3 from Zymomonas mobilis subsp. mobilis (strain ATCC 31821 / ZM4 / CP4).